The primary structure comprises 755 residues: Atypical kinase coq-8, mitochondrial (755 aa).

The disordered stretch occupies residues 57-78 (QDVDPLKEPNKTNAPLLSPTLP). The segment covering 67–78 (KTNAPLLSPTLP) has biased composition (polar residues). Residues 435-443 (FACASIGQV) and Lys-457 each bind ATP. The Proton acceptor role is filled by Asp-587.

The protein belongs to the protein kinase superfamily. ADCK protein kinase family.

Its subcellular location is the mitochondrion. The protein operates within cofactor biosynthesis; ubiquinone biosynthesis. Atypical kinase involved in the biosynthesis of coenzyme Q, also named ubiquinone, an essential lipid-soluble electron transporter for aerobic cellular respiration. Its substrate specificity is still unclear: may act as a protein kinase that mediates phosphorylation of coq-3. According to other reports, acts as a small molecule kinase, possibly a lipid kinase that phosphorylates a prenyl lipid in the ubiquinone biosynthesis pathway, as suggested by its ability to bind coenzyme Q lipid intermediates. The sequence is that of Atypical kinase coq-8, mitochondrial (coq-8) from Caenorhabditis elegans.